We begin with the raw amino-acid sequence, 323 residues long: Aldo-keto reductase family 1 member C21 (323 aa).

20-24 (GFGTA) lines the NADP(+) pocket. Lys31 provides a ligand contact to substrate. Asp50 is an NADP(+) binding site. Catalysis depends on Tyr55, which acts as the Proton donor. A substrate-binding site is contributed by His117. Residues 166 to 167 (SN), Gln190, 216 to 224 (YGVLGTQRY), and 270 to 280 (TSLKEERIKEN) contribute to the NADP(+) site.

It belongs to the aldo/keto reductase family. Monomer. Detected in kidney and brain.

It is found in the cytoplasm. The catalysed reaction is androsterone + NADP(+) = 5alpha-androstan-3,17-dione + NADPH + H(+). It catalyses the reaction androsterone + NAD(+) = 5alpha-androstan-3,17-dione + NADH + H(+). Inhibited by high concentrations of substrate. Functionally, NADP-dependent 17-alpha-hydroxysteroid dehydrogenase that converts 5-alpha-androstane-3,17-dione into androsterone. Has lower 3-alpha-hydroxysteroid dehydrogenase activity. Has broad substrate specificity and acts on various 17-alpha-hydroxysteroids, 17-ketosteroids, 3-alpha hydroxysteroids and 3-ketosteroids. Reduction of keto groups is strictly stereoselective. Reduction of 17-ketosteroids yields only 17-alpha-hydroxysteroids. Likewise, reduction of 3-ketosteroids yields only 3-alpha-hydroxysteroids. This is Aldo-keto reductase family 1 member C21 (Akr1c21) from Mus musculus (Mouse).